The chain runs to 627 residues: Threonine--tRNA ligase (627 aa).

Residues 221-523 form a catalytic region; sequence DHRKLGRELG…LIEHFAGDFP (303 aa). Positions 319, 370, and 500 each coordinate Zn(2+).

Belongs to the class-II aminoacyl-tRNA synthetase family. As to quaternary structure, homodimer. It depends on Zn(2+) as a cofactor.

It localises to the cytoplasm. It catalyses the reaction tRNA(Thr) + L-threonine + ATP = L-threonyl-tRNA(Thr) + AMP + diphosphate + H(+). Functionally, catalyzes the attachment of threonine to tRNA(Thr) in a two-step reaction: L-threonine is first activated by ATP to form Thr-AMP and then transferred to the acceptor end of tRNA(Thr). Also edits incorrectly charged L-seryl-tRNA(Thr). The protein is Threonine--tRNA ligase of Gloeobacter violaceus (strain ATCC 29082 / PCC 7421).